A 666-amino-acid polypeptide reads, in one-letter code: Adenylylsulfate reductase subunit alpha (666 aa).

FAD-binding positions include G32 to G35, D60 to K61, S67 to A69, N78, I193, S259, S417, A461 to D462, and S472.

The protein belongs to the FAD-dependent oxidoreductase 2 family. In terms of assembly, heterodimer composed of AprA and AprB. The heterodimers can dimerize to form heterotetramers. FAD is required as a cofactor.

Its subcellular location is the cytoplasm. The catalysed reaction is sulfite + A + AMP + 2 H(+) = adenosine 5'-phosphosulfate + AH2. In terms of biological role, catalytic subunit of the adenylylsulfate reductase which catalyzes reversibly the reduction of adenosine 5'-phosphosulfate (APS) to sulfite and AMP during dissimilatory sulfate reduction. In Megalodesulfovibrio gigas (strain ATCC 19364 / DSM 1382 / NCIMB 9332 / VKM B-1759) (Desulfovibrio gigas), this protein is Adenylylsulfate reductase subunit alpha.